Here is a 383-residue protein sequence, read N- to C-terminus: Acetylornithine deacetylase (383 aa).

Histidine 80 contributes to the Zn(2+) binding site. Aspartate 82 is a catalytic residue. A Zn(2+)-binding site is contributed by aspartate 112. Glutamate 144 is a catalytic residue. The Zn(2+) site is built by glutamate 145, glutamate 169, and histidine 355.

Belongs to the peptidase M20A family. ArgE subfamily. In terms of assembly, homodimer. The cofactor is Zn(2+). It depends on Co(2+) as a cofactor. Glutathione is required as a cofactor.

The protein resides in the cytoplasm. The enzyme catalyses N(2)-acetyl-L-ornithine + H2O = L-ornithine + acetate. The protein operates within amino-acid biosynthesis; L-arginine biosynthesis; L-ornithine from N(2)-acetyl-L-ornithine (linear): step 1/1. Catalyzes the hydrolysis of the amide bond of N(2)-acetylated L-amino acids. Cleaves the acetyl group from N-acetyl-L-ornithine to form L-ornithine, an intermediate in L-arginine biosynthesis pathway, and a branchpoint in the synthesis of polyamines. The sequence is that of Acetylornithine deacetylase from Salmonella typhimurium (strain LT2 / SGSC1412 / ATCC 700720).